A 379-amino-acid polypeptide reads, in one-letter code: Beta-1,3-N-acetylglucosaminyltransferase lunatic fringe (379 aa).

The Cytoplasmic segment spans residues 1-8 (MLKRCGRR). The helical; Signal-anchor for type II membrane protein transmembrane segment at 9–29 (LLLALAGALLACLLVLTADPP) threads the bilayer. Topologically, residues 30 to 379 (PPPLPAERGR…TPWCPRTAIF (350 aa)) are lumenal. Residues 86-107 (RDAGPPPGAAPRPADGHPRPLA) form a disordered region. Arg129 is a substrate binding site. Asn167 is a glycosylation site (N-linked (GlcNAc...) asparagine). Disulfide bonds link Cys168–Cys179 and Cys197–Cys260. Substrate is bound at residue Asp201. Asp202 contributes to the Mn(2+) binding site. The active site involves Asp290. His314 serves as a coordination point for Mn(2+). Cys364 and Cys373 form a disulfide bridge.

It belongs to the glycosyltransferase 31 family. The cofactor is Mn(2+). Requires Co(2+) as cofactor. A soluble form may be derived from the membrane form by proteolytic processing.

The protein resides in the golgi apparatus. It localises to the golgi apparatus membrane. It carries out the reaction 3-O-(alpha-L-fucosyl)-L-threonyl-[EGF-like domain protein] + UDP-N-acetyl-alpha-D-glucosamine = 3-O-(N-acetyl-beta-D-glucosaminyl-(1-&gt;3)-alpha-L-fucosyl)-L-threonyl-[EGF-like domain protein] + UDP + H(+). The catalysed reaction is 3-O-(alpha-L-fucosyl)-L-seryl-[EGF-like domain protein] + UDP-N-acetyl-alpha-D-glucosamine = 3-O-(N-acetyl-beta-D-glucosaminyl-(1-&gt;3)-alpha-L-fucosyl)-L-seryl-[EGF-like domain protein] + UDP + H(+). Functionally, glycosyltransferase that initiates the elongation of O-linked fucose residues attached to EGF-like repeats in the extracellular domain of Notch molecules. Modulates NOTCH1 activity by modifying O-fucose residues at specific EGF-like domains resulting in inhibition of NOTCH1 activation by JAG1 and enhancement of NOTCH1 activation by DLL1 via an increase in its binding to DLL1. Decreases the binding of JAG1 to NOTCH2 but not that of DLL1. Essential mediator of somite segmentation and patterning. This chain is Beta-1,3-N-acetylglucosaminyltransferase lunatic fringe, found in Homo sapiens (Human).